Reading from the N-terminus, the 272-residue chain is TIP41-like protein (272 aa).

Residue lysine 106 is modified to N6-acetyllysine. The tract at residues 173 to 272 (RVMPSSFFLL…ADSQKSTQVE (100 aa)) is interaction with PPP2CA. Serine 265 carries the post-translational modification Phosphoserine.

Belongs to the TIP41 family. Isoform 1 interacts with PPP2CA. Isoform 2 does not interact with PPP2CA. Interacts with PPP2CB, PPP4C and PPP6C. Interacts with IGBP1; the interaction is dependent on PPP2CA. Associates with a protein phosphatase 2A PP2A(C):IGBP1 complex. Interacts with PPP4C and PPP4R2.

Its subcellular location is the cytoplasm. In terms of biological role, may be a allosteric regulator of serine/threonine-protein phosphatase 2A (PP2A). Isoform 1 inhibits catalytic activity of the PP2A(D) core complex in vitro. The PP2A(C):TIPRL complex does not show phosphatase activity. Acts as a negative regulator of serine/threonine-protein phosphatase 4 probably by inhibiting the formation of the active PPP4C:PPP4R2 complex; the function is proposed to implicate it in DNA damage response by promoting H2AX phosphorylated on Ser-140 (gamma-H2AX). May play a role in the regulation of ATM/ATR signaling pathway controlling DNA replication and repair. This is TIP41-like protein (TIPRL) from Homo sapiens (Human).